Reading from the N-terminus, the 1162-residue chain is Spike glycoprotein (1162 aa).

The N-terminal stretch at 1–18 is a signal peptide; the sequence is MLVTPLLLVTLLCALCSA. Residues 19 to 1095 lie on the Extracellular side of the membrane; it reads ALYDSSSYVY…LKTYIKWPWY (1077 aa). Asn51, Asn77, Asn103, Asn144, Asn163, Asn178, Asn212, Asn237, Asn247, Asn264, Asn271, Asn276, Asn306, Asn425, Asn447, Asn513, Asn530, Asn579, Asn591, Asn669, Asn676, and Asn714 each carry an N-linked (GlcNAc...) asparagine; by host glycan. Residues 769-874 are heptad repeat 1 (HR1); the sequence is IPFATQLQAR…QVDRLITGRL (106 aa). Residues 822 to 866 adopt a coiled-coil conformation; sequence QDVVNKQSAILTETMASLNKNFGAISSVIQEIYLQLDAIQANAQV. 7 N-linked (GlcNAc...) asparagine; by host glycosylation sites follow: Asn947, Asn960, Asn979, Asn1014, Asn1051, Asn1058, and Asn1074. The interval 1024 to 1105 is heptad repeat 2 (HR2); that stretch reads NDDFDFDDEL…VWLAIAFATI (82 aa). Residues 1055-1083 are a coiled coil; it reads PVLNITYDIDKIEEVIKGLNDSLIDLETL. The helical transmembrane segment at 1096–1116 threads the bilayer; it reads VWLAIAFATIIFILILGWVFF. Over 1117 to 1162 the chain is Cytoplasmic; sequence MTGCCGCCCGCFGIIPLMSKCGKKSSYYTTFDNDVVTEQYRPKKSV. Residues 1159 to 1162 carry the Di-lysine motif motif; sequence KKSV.

It belongs to the gammacoronaviruses spike protein family. In terms of assembly, homotrimer; each monomer consists of a S1 and a S2 subunit. The resulting peplomers protrude from the virus surface as spikes. Post-translationally, specific enzymatic cleavages in vivo yield mature proteins. The precursor is processed into S1 and S2 by host cell furin or furin-like protease to yield the mature S1 and S2 proteins. The cleavage site between S1 and S2 requires the optimal sequence [KR]-X-[KR]-R. Additionally, a second cleavage leads to the release of a fusion peptide after viral attachment to host cell receptor.

The protein localises to the virion membrane. Its subcellular location is the host endoplasmic reticulum-Golgi intermediate compartment membrane. Its function is as follows. Attaches the virion to the host cell membrane by interacting with sialic acids, initiating the infection. In terms of biological role, mediates fusion of the virion and cellular membranes by acting as a class I viral fusion protein. Under the current model, the protein has at least 3 conformational states: pre-fusion native state, pre-hairpin intermediate state, and post-fusion hairpin state. During viral and target cell membrane fusion, the coiled coil regions (heptad repeats) assume a trimer-of-hairpins structure, positioning the fusion peptide in close proximity to the C-terminal region of the ectodomain. The formation of this structure appears to drive apposition and subsequent fusion of viral and target cell membranes. Functionally, acts as a viral fusion peptide after S2 cleavage occurring upon virus endocytosis. The protein is Spike glycoprotein of Avian infectious bronchitis virus (strain KB8523) (IBV).